The chain runs to 760 residues: BMP/retinoic acid-inducible neural-specific protein 1 (760 aa).

An N-terminal signal peptide occupies residues 1–16 (MNWRFVELLYFLFVWG). One can recognise an MACPF domain in the interval 68 to 251 (RYKIYREFAR…FVQSALSYIM (184 aa)). N-linked (GlcNAc...) asparagine glycans are attached at residues N156, N433, N443, N553, N599, N630, and N676.

The protein belongs to the BRINP family. As to expression, expressed in brain. Expressed in GABAergic neurons of the pre-frontal cortex. Weakly expressed in embryonic stem (ES) cells and in ES-derived neural stem cells (NSCs).

The protein localises to the cytoplasm. In terms of biological role, plays a role in neurogenesis, brain development, and the functioning of GABAergic neurons. May suppress cell cycle progression in postmitotic neurons by inhibiting G1/S transition. This Mus musculus (Mouse) protein is BMP/retinoic acid-inducible neural-specific protein 1 (Brinp1).